Here is a 248-residue protein sequence, read N- to C-terminus: UPF0246 protein FN1762 (248 aa).

The protein belongs to the UPF0246 family.

In Fusobacterium nucleatum subsp. nucleatum (strain ATCC 25586 / DSM 15643 / BCRC 10681 / CIP 101130 / JCM 8532 / KCTC 2640 / LMG 13131 / VPI 4355), this protein is UPF0246 protein FN1762.